The sequence spans 339 residues: Putative methylthioribose-1-phosphate isomerase (339 aa).

Residues 43–45 (RGA), arginine 86, and glutamine 191 contribute to the substrate site. Aspartate 232 (proton donor) is an active-site residue. Residue 241-242 (NK) participates in substrate binding.

Belongs to the eIF-2B alpha/beta/delta subunits family. MtnA subfamily.

The enzyme catalyses 5-(methylsulfanyl)-alpha-D-ribose 1-phosphate = 5-(methylsulfanyl)-D-ribulose 1-phosphate. Functionally, catalyzes the interconversion of methylthioribose-1-phosphate (MTR-1-P) into methylthioribulose-1-phosphate (MTRu-1-P). In Archaeoglobus fulgidus (strain ATCC 49558 / DSM 4304 / JCM 9628 / NBRC 100126 / VC-16), this protein is Putative methylthioribose-1-phosphate isomerase.